A 154-amino-acid polypeptide reads, in one-letter code: MAVDPNVKTLVDNRRARFEYDILETYEAGIQLTGTEVKSIRAGKANLQDAFALFRDGEAWLHNLHISPHDTASKVFNHDPTRRRKLLLHRREIDRLRGLVEQKGLTVVPLKLVLNRGWIKAHLGVARGKKLHDKRQAIKERQTQREIQRELKER.

Positions Lys-134 to Arg-154 are disordered.

Belongs to the SmpB family.

It is found in the cytoplasm. Functionally, required for rescue of stalled ribosomes mediated by trans-translation. Binds to transfer-messenger RNA (tmRNA), required for stable association of tmRNA with ribosomes. tmRNA and SmpB together mimic tRNA shape, replacing the anticodon stem-loop with SmpB. tmRNA is encoded by the ssrA gene; the 2 termini fold to resemble tRNA(Ala) and it encodes a 'tag peptide', a short internal open reading frame. During trans-translation Ala-aminoacylated tmRNA acts like a tRNA, entering the A-site of stalled ribosomes, displacing the stalled mRNA. The ribosome then switches to translate the ORF on the tmRNA; the nascent peptide is terminated with the 'tag peptide' encoded by the tmRNA and targeted for degradation. The ribosome is freed to recommence translation, which seems to be the essential function of trans-translation. The protein is SsrA-binding protein of Synechococcus sp. (strain JA-2-3B'a(2-13)) (Cyanobacteria bacterium Yellowstone B-Prime).